The sequence spans 83 residues: Small ribosomal subunit protein uS17 (83 aa).

The protein belongs to the universal ribosomal protein uS17 family. In terms of assembly, part of the 30S ribosomal subunit.

Functionally, one of the primary rRNA binding proteins, it binds specifically to the 5'-end of 16S ribosomal RNA. In Francisella tularensis subsp. tularensis (strain FSC 198), this protein is Small ribosomal subunit protein uS17.